The primary structure comprises 221 residues: NAD(P)H-hydrate epimerase (221 aa).

The YjeF N-terminal domain maps to methionine 10–leucine 211. Asparagine 58–aspartate 62 is a (6S)-NADPHX binding site. Asparagine 59 and aspartate 121 together coordinate K(+). (6S)-NADPHX contacts are provided by residues glycine 125–proline 131 and aspartate 154. Residue serine 157 participates in K(+) binding.

It belongs to the NnrE/AIBP family. Requires K(+) as cofactor.

It catalyses the reaction (6R)-NADHX = (6S)-NADHX. The enzyme catalyses (6R)-NADPHX = (6S)-NADPHX. In terms of biological role, catalyzes the epimerization of the S- and R-forms of NAD(P)HX, a damaged form of NAD(P)H that is a result of enzymatic or heat-dependent hydration. This is a prerequisite for the S-specific NAD(P)H-hydrate dehydratase to allow the repair of both epimers of NAD(P)HX. The chain is NAD(P)H-hydrate epimerase from Weissella koreensis (strain KACC 15510).